The chain runs to 199 residues: Probable V-type proton ATPase 20 kDa proteolipid subunit (199 aa).

The Vacuolar portion of the chain corresponds to 1 to 3; the sequence is MSL. The helical transmembrane segment at 4–24 threads the bilayer; it reads FSTSLWTTTVMSIIVGLYMLF. Over 25–46 the chain is Cytoplasmic; that stretch reads HNSGESFDFGSFLLDTSPYTWG. Residues 47 to 67 form a helical membrane-spanning segment; that stretch reads LLGIASCVAFGIIGAAWGIFI. Residues 68-86 are Vacuolar-facing; the sequence is CGTSILGGAVKAPRIKTKN. A helical membrane pass occupies residues 87–107; that stretch reads LISIIFCEVVAIYSLIIAIVF. The Cytoplasmic segment spans residues 108 to 130; the sequence is SAKINDINPAGFYTKSHYYTGFA. A helical membrane pass occupies residues 131–151; that stretch reads LFWGGITVGLCNLICGVCVGI. At 152-170 the chain is on the vacuolar side; it reads TGSSAALADAQDASLFVKV. The chain crosses the membrane as a helical span at residues 171–191; sequence LVVEIFGSVLGLFGLIVGLLI. Residues 192–199 lie on the Cytoplasmic side of the membrane; sequence GGKASDFS.

This sequence belongs to the V-ATPase proteolipid subunit family. In terms of assembly, V-ATPase is a heteromultimeric enzyme composed of a peripheral catalytic V1 complex (components A to H) attached to an integral membrane V0 proton pore complex (components: a, c, c', c'', d, e, f and VOA1). The decameric c-ring forms the proton-conducting pore, and is composed of eight proteolipid subunits c, one subunit c' and one subunit c''.

The protein localises to the vacuole membrane. In terms of biological role, proton-conducting pore forming subunit of the V0 complex of vacuolar(H+)-ATPase (V-ATPase), a multisubunit enzyme composed of a peripheral complex (V1) that hydrolyzes ATP and a membrane integral complex (V0) that translocates protons. V-ATPase is responsible for acidifying and maintaining the pH of intracellular compartments. This chain is Probable V-type proton ATPase 20 kDa proteolipid subunit (vma16), found in Schizosaccharomyces pombe (strain 972 / ATCC 24843) (Fission yeast).